The chain runs to 519 residues: Exodeoxyribonuclease 7 large subunit (519 aa).

Positions 500–519 (VGRGKTRKPKEEPPAQGSLL) are disordered.

Belongs to the XseA family. As to quaternary structure, heterooligomer composed of large and small subunits.

The protein resides in the cytoplasm. The enzyme catalyses Exonucleolytic cleavage in either 5'- to 3'- or 3'- to 5'-direction to yield nucleoside 5'-phosphates.. In terms of biological role, bidirectionally degrades single-stranded DNA into large acid-insoluble oligonucleotides, which are then degraded further into small acid-soluble oligonucleotides. The polypeptide is Exodeoxyribonuclease 7 large subunit (Cereibacter sphaeroides (strain ATCC 17023 / DSM 158 / JCM 6121 / CCUG 31486 / LMG 2827 / NBRC 12203 / NCIMB 8253 / ATH 2.4.1.) (Rhodobacter sphaeroides)).